Consider the following 479-residue polypeptide: Adenosylhomocysteinase (479 aa).

Positions 56, 133, and 199 each coordinate substrate. 200-202 (TTT) provides a ligand contact to NAD(+). The substrate site is built by K229 and D233. Residues N234, 263–268 (GYGDVG), E286, N321, 342–344 (IGH), and N390 contribute to the NAD(+) site.

This sequence belongs to the adenosylhomocysteinase family. Homotetramer. Requires NAD(+) as cofactor.

The catalysed reaction is S-adenosyl-L-homocysteine + H2O = L-homocysteine + adenosine. It functions in the pathway amino-acid biosynthesis; L-homocysteine biosynthesis; L-homocysteine from S-adenosyl-L-homocysteine: step 1/1. Functionally, adenosylhomocysteine is a competitive inhibitor of S-adenosyl-L-methionine-dependent methyl transferase reactions; therefore adenosylhomocysteinase may play a key role in the control of methylations via regulation of the intracellular concentration of adenosylhomocysteine. The sequence is that of Adenosylhomocysteinase from Plasmodium yoelii yoelii.